The primary structure comprises 526 residues: ATP synthase subunit alpha (526 aa).

178–185 (GDRQTGKT) serves as a coordination point for ATP.

It belongs to the ATPase alpha/beta chains family. F-type ATPases have 2 components, CF(1) - the catalytic core - and CF(0) - the membrane proton channel. CF(1) has five subunits: alpha(3), beta(3), gamma(1), delta(1), epsilon(1). CF(0) has four main subunits: a(1), b(1), b'(1) and c(9-12).

It localises to the cell membrane. The enzyme catalyses ATP + H2O + 4 H(+)(in) = ADP + phosphate + 5 H(+)(out). Functionally, produces ATP from ADP in the presence of a proton gradient across the membrane. The alpha chain is a regulatory subunit. This chain is ATP synthase subunit alpha, found in Roseiflexus castenholzii (strain DSM 13941 / HLO8).